We begin with the raw amino-acid sequence, 585 residues long: Pre-mRNA-splicing factor sap145 (585 aa).

Residues 1 to 74 adopt a coiled-coil conformation; sequence MAEIQTAQNP…NNDNLYNDKK (74 aa). The interval 1–84 is disordered; it reads MAEIQTAQNP…SNGNFYDTNK (84 aa). The segment covering 12 to 22 has biased composition (basic and acidic residues); sequence KELEKILERNN. Basic residues predominate over residues 23–41; that stretch reads KQKNKKSRNQVRREKKKLL. Residues 51 to 62 show a composition bias toward basic and acidic residues; it reads LAEKNSDDKDQL. A Phosphoserine modification is found at S145. A disordered region spans residues 400-460; the sequence is IHAGTGSPVS…SASEPRSQRE (61 aa). Positions 416–439 are enriched in acidic residues; sequence LEEFEEEESSEEEESEDVEYPTEE.

In terms of assembly, belongs to the 40S cdc5-associated complex (or cwf complex), a spliceosome sub-complex reminiscent of a late-stage spliceosome composed of the U2, U5 and U6 snRNAs and at least brr2, cdc5, cwf2/prp3, cwf3/syf1, cwf4/syf3, cwf5/ecm2, spp42/cwf6, cwf7/spf27, cwf8, cwf9, cwf10, cwf11, cwf12, prp45/cwf13, cwf14, cwf15, cwf16, cwf17, cwf18, cwf19, cwf20, cwf21, cwf22, cwf23, cwf24, cwf25, cwf26, cyp7/cwf27, cwf28, cwf29/ist3, lea1, msl1, prp5/cwf1, prp10/sap155, prp12/sap130, prp17, prp22, sap61, sap62, sap114, sap145, slu7, smb1, smd1, smd3, smf1, smg1 and syf2. Sap145 is part of the SF3b subcomplex of the Prp19-associated nineteen complex (NTC), composed of ini1, prp10, prp12/sap130, sap10/sap155, sap14, sap49 and sap145. Part of the U2 snRNP.

Its subcellular location is the nucleus. The protein localises to the cytoplasm. Its function is as follows. Involved in pre-mRNA splicing. May be involved in endoplasmic reticulum-associated protein degradation (ERAD) and required for growth at low and high temperatures. This Schizosaccharomyces pombe (strain 972 / ATCC 24843) (Fission yeast) protein is Pre-mRNA-splicing factor sap145 (sap145).